The sequence spans 463 residues: Phosphoglucosamine mutase (463 aa).

S110 serves as the catalytic Phosphoserine intermediate. The Mg(2+) site is built by S110, D255, D257, and D259. S110 bears the Phosphoserine mark.

It belongs to the phosphohexose mutase family. The cofactor is Mg(2+). Activated by phosphorylation.

The enzyme catalyses alpha-D-glucosamine 1-phosphate = D-glucosamine 6-phosphate. Its function is as follows. Catalyzes the conversion of glucosamine-6-phosphate to glucosamine-1-phosphate. This is Phosphoglucosamine mutase from Koribacter versatilis (strain Ellin345).